Here is a 457-residue protein sequence, read N- to C-terminus: Vasoactive intestinal polypeptide receptor (457 aa).

Positions 1–19 (MGLVEVVWWWRWRFGGGGG) are cleaved as a signal peptide. Residues 20–141 (GLVVEVEVWW…KEQTAFYGTV (122 aa)) lie on the Extracellular side of the membrane. 3 disulfide bridges follow: Cys51/Cys73, Cys64/Cys105, and Cys87/Cys122. N-linked (GlcNAc...) asparagine glycosylation is found at Asn59, Asn70, Asn100, and Asn104. Residues 142–166 (KTGYTIGHTLSLIALTAAMIILCLF) form a helical membrane-spanning segment. The Cytoplasmic portion of the chain corresponds to 167–173 (RKLHCTR). A helical transmembrane segment spans residues 174–193 (NYIHMHLFMSFIMRAIAVFI). The Extracellular portion of the chain corresponds to 194-215 (KDVTLFESGEPEHCFVSSVGCK). An intrachain disulfide couples Cys214 to Cys284. A helical transmembrane segment spans residues 216–239 (AMMVFFQYCVMANFFWLLVEGLYL). Residues 240–253 (HTLLVISFFSERKY) are Cytoplasmic-facing. Residues 254–275 (FWWYILIGWGAPSVFITAWTVV) traverse the membrane as a helical segment. At 276-292 (RIYFFNVGCWEEIIESP) the chain is on the extracellular side. A helical membrane pass occupies residues 293–316 (IWWIIKTPILVSILVNFILFICII). Topologically, residues 317-341 (RILVQKLHSPDVGHNETSQYSRLAK) are cytoplasmic. Residues 342–361 (STLLLIPLFGIHYIMFAFFP) traverse the membrane as a helical segment. Over 362-373 (DNFKAQVKLVFE) the chain is Extracellular. The chain crosses the membrane as a helical span at residues 374-393 (LVVGSFQGFVVAVLYCFLNG). Over 394-457 (EVQAELKRKW…SSFQAEFSLV (64 aa)) the chain is Cytoplasmic.

This sequence belongs to the G-protein coupled receptor 2 family. Expressed in pituitary, hypothalamus, small intestine and ovarian follicles.

The protein localises to the cell membrane. Functionally, this is a receptor for VIP. The activity of this receptor is mediated by G proteins which activate adenylyl cyclase. The polypeptide is Vasoactive intestinal polypeptide receptor (VIPR1) (Meleagris gallopavo (Wild turkey)).